A 324-amino-acid polypeptide reads, in one-letter code: tRNA-modifying protein YgfZ (324 aa).

Residue Trp-186 participates in folate binding.

This sequence belongs to the tRNA-modifying YgfZ family.

The protein resides in the cytoplasm. Functionally, folate-binding protein involved in regulating the level of ATP-DnaA and in the modification of some tRNAs. It is probably a key factor in regulatory networks that act via tRNA modification, such as initiation of chromosomal replication. This is tRNA-modifying protein YgfZ from Colwellia psychrerythraea (strain 34H / ATCC BAA-681) (Vibrio psychroerythus).